Reading from the N-terminus, the 452-residue chain is Selenide, water dikinase 2 (452 aa).

An N-acetylalanine modification is found at Ala-2. Ser-49 is modified (phosphoserine). Sec-63 is a catalytic residue. Position 63 (Sec-63) is a non-standard amino acid, selenocysteine. Lys-66 provides a ligand contact to ATP. Residues 86–111 (PPLTSGLVGGQEETVQEGGLSTRPGP) form a disordered region. The segment covering 95–105 (GQEETVQEGGL) has biased composition (low complexity). ATP contacts are provided by residues 121 to 123 (GMD), Asp-141, Asp-164, and 215 to 218 (GGQT). A Mg(2+)-binding site is contributed by Asp-123. Position 164 (Asp-164) interacts with Mg(2+). Asp-319 is a binding site for Mg(2+).

This sequence belongs to the selenophosphate synthase 1 family. Class I subfamily. As to quaternary structure, homodimer. Mg(2+) is required as a cofactor. Post-translationally, truncated SEPHS2 proteins produced by failed UGA/Sec decoding are ubiquitinated by the CRL2(KLHDC3) complex, which recognizes the glycine (Gly) at the C-terminus of truncated SEPHS2 proteins.

It catalyses the reaction hydrogenselenide + ATP + H2O = selenophosphate + AMP + phosphate + 2 H(+). Its function is as follows. Synthesizes selenophosphate from selenide and ATP. The polypeptide is Selenide, water dikinase 2 (Sephs2) (Mus musculus (Mouse)).